The primary structure comprises 473 residues: FAD-dependent monooxygenase ctvC (473 aa).

Glu37, Ala51, and Arg110 together coordinate FAD. A helical membrane pass occupies residues 218–238; the sequence is IGPGFTFLIFPAAGDSLFWVL. FAD contacts are provided by Asp310 and Ala323. Asn358 carries N-linked (GlcNAc...) asparagine glycosylation. A helical transmembrane segment spans residues 451-471; it reads LVYCFGVVILLWISWAVFNVN.

The protein belongs to the paxM FAD-dependent monooxygenase family. FAD is required as a cofactor.

The protein resides in the membrane. The protein operates within mycotoxin biosynthesis. In terms of biological role, FAD-dependent monooxygenase; part of the gene cluster that mediates the biosynthesis of citreoviridin, an inhibitor of the of F1-ATPase beta-subunit. The HR-PKS ctvA accepts acetyl-CoA as the starter unit and catalyzes eight iterations of malonyl-CoA extension and four iterations of SAM-dependent methylation at C4, C12, C14, and C16. The KR and DH domains selectively act on the first six iterations to generate the hexaene chain. In the last three iterations, the KR and DH domains terminate their functions to yield a beta,delta-diketo ester moiety, which then undergoes intramolecular cyclization to yield an alpha-pyrone intermediate. Subsequently, ctvB methylates the alpha-pyrone hydroxyl group to generate citreomontanin. In order to form the tetrahydrofuran ring with the correct stereochemistry, the terminal alkenes of citreomontanin need to undergo isomerization to yield a (17Z)-hexaene, a step that could be catalyzed by ctvC. The (17Z)-hexaene then undergoes bisepoxidation by ctvC to form a (17R,16R,15S,14R)-bisepoxide moiety. Lastly, ctvD acts as a regioselective hydrolase to form the tetrahydrofuran ring with the substituents in the correct absolute configuration, completing the biosynthesis of citreoviridin. This Aspergillus terreus (strain NIH 2624 / FGSC A1156) protein is FAD-dependent monooxygenase ctvC.